A 935-amino-acid chain; its full sequence is DNA repair protein rev1 (935 aa).

Residues 59–147 (SKSDLFHGLA…KILPWINYRT (89 aa)) form the BRCT domain. Positions 162–178 (SKPSQPEGNLEDIQTSS) are enriched in polar residues. Residues 162–193 (SKPSQPEGNLEDIQTSSQEEEHDNEKDKTKES) form a disordered region. Residues 184–193 (DNEKDKTKES) are compositionally biased toward basic and acidic residues. An interaction with target DNA region spans residues 235–245 (FFSSSRLHHLS). Residues R240 and 283–287 (DFDCF) contribute to the dCTP site. One can recognise a UmuC domain in the interval 279 to 460 (LLHVDFDCFF…LSVQDLPGVG (182 aa)). Mg(2+) contacts are provided by D283 and F284. The tract at residues 310–312 (IKN) is interaction with target DNA. DCTP contacts are provided by residues 317-323 (SCNYEAR), N329, and D378. 2 residues coordinate Mg(2+): D378 and E379. Interaction with target DNA stretches follow at residues 460–463 (GSSQ) and 517–525 (RRSISVDVN).

Belongs to the DNA polymerase type-Y family. Mg(2+) serves as cofactor.

It is found in the nucleus. The protein localises to the nucleolus. The protein resides in the mitochondrion. Its subcellular location is the cytoplasm. It localises to the cytoskeleton. It is found in the spindle. Functionally, deoxycytidyl transferase involved in DNA repair. Transfers a dCMP residue from dCTP to the 3'-end of a DNA primer in a template-dependent reaction. May assist in the first step in the bypass of abasic lesions by the insertion of a nucleotide opposite the lesion. Required for normal induction of mutations by physical and chemical agents. Involved in mitochondrial DNA mutagenesis. The chain is DNA repair protein rev1 from Schizosaccharomyces pombe (strain 972 / ATCC 24843) (Fission yeast).